The sequence spans 892 residues: Translation initiation factor IF-2 (892 aa).

The segment covering 138–185 has biased composition (basic and acidic residues); that stretch reads QRNLAEQQRLAEVDRQRVEEQERKRREEEQAELERQKTESRVVEEILV. Disordered stretches follow at residues 138 to 250 and 262 to 298; these read QRNL…EDDS and AAER…SGAH. Residues 207–219 are compositionally biased toward low complexity; sequence LPRTVRPTPAARP. Residues 391-560 enclose the tr-type G domain; sequence PRPPVVTIMG…SIQAEVLELK (170 aa). Residues 400 to 407, 446 to 450, and 500 to 503 each bind GTP; these read GHVDHGKT, DTPGH, and SKID.

Belongs to the TRAFAC class translation factor GTPase superfamily. Classic translation factor GTPase family. IF-2 subfamily.

The protein localises to the cytoplasm. Functionally, one of the essential components for the initiation of protein synthesis. Protects formylmethionyl-tRNA from spontaneous hydrolysis and promotes its binding to the 30S ribosomal subunits. Also involved in the hydrolysis of GTP during the formation of the 70S ribosomal complex. The protein is Translation initiation factor IF-2 of Xylella fastidiosa (strain Temecula1 / ATCC 700964).